Consider the following 85-residue polypeptide: Small ribosomal subunit protein bS20 (85 aa).

The protein belongs to the bacterial ribosomal protein bS20 family.

Binds directly to 16S ribosomal RNA. This chain is Small ribosomal subunit protein bS20, found in Borrelia hermsii (strain HS1 / DAH).